A 792-amino-acid chain; its full sequence is Coiled-coil domain-containing protein R3HCC1L (792 aa).

The interval 7-27 (RCRVRARRPDMALYVPKARRG) is EJC-binding motif; may mediate interaction with the EJC. 2 disordered regions span residues 32 to 61 (KTGDEEESCGSPNSVVKEKQKESSLSQKEV) and 527 to 567 (EFKT…TSHT). S688 is subject to Phosphoserine. Position 712 is a phosphothreonine (T712). Residues 751–783 (RSKQSKTEREAELKKLQEARERKRLEAKQREDI) adopt a coiled-coil conformation. Residues 772 to 792 (RKRLEAKQREDIWEGRDQSTV) form a disordered region.

In terms of assembly, may interact with the exon junction complex (EJC) composed at least of CASC3, EIF4A3, MAGOH and RBM8A. In terms of tissue distribution, expressed in placenta.

This Homo sapiens (Human) protein is Coiled-coil domain-containing protein R3HCC1L (R3HCC1L).